A 401-amino-acid chain; its full sequence is Exodeoxyribonuclease 7 large subunit (401 aa).

The protein belongs to the XseA family. In terms of assembly, heterooligomer composed of large and small subunits.

The protein resides in the cytoplasm. The catalysed reaction is Exonucleolytic cleavage in either 5'- to 3'- or 3'- to 5'-direction to yield nucleoside 5'-phosphates.. Functionally, bidirectionally degrades single-stranded DNA into large acid-insoluble oligonucleotides, which are then degraded further into small acid-soluble oligonucleotides. The sequence is that of Exodeoxyribonuclease 7 large subunit from Thermoanaerobacter pseudethanolicus (strain ATCC 33223 / 39E) (Clostridium thermohydrosulfuricum).